A 1244-amino-acid polypeptide reads, in one-letter code: Ras-specific guanine nucleotide-releasing factor 2 (1244 aa).

Residues 22–129 (EGTKRGYLSK…WVEAIQQASY (108 aa)) enclose the PH 1 domain. Residues 147–189 (VQIVETEKVAANQLRTQLEDQDTEIERLKAEIIALNKTKERMR) are a coiled coil. The region spanning 201-230 (DIKKIKKVQSFMRGWLCRRKWKIIVQDYIC) is the IQ domain. A DH domain is found at 239–425 (KRNQIVFNMV…EELSRVMHDE (187 aa)). A PH 2 domain is found at 466-584 (PSVERGKLSK…WTSDISQCID (119 aa)). Positions 631–745 (KVPQIRYASV…PVRTRKLSLN (115 aa)) constitute an N-terminal Ras-GEF domain. 3 disordered regions span residues 704-743 (NRSG…RKLS), 759-814 (TTSS…NAEV), and 843-879 (PESP…AENS). Basic and acidic residues predominate over residues 706–715 (SGDHVNDKSP). Residues 728–743 (SISSRTSSPVRTRKLS) show a composition bias toward polar residues. Low complexity-rich tracts occupy residues 759 to 774 (TTSS…ANPT) and 781 to 806 (NNNN…QSPG). The Ras-GEF domain occupies 1009 to 1241 (SAMEIAEQIT…YDLSLKIEPR (233 aa)).

The protein resides in the cytoplasm. Its subcellular location is the cell membrane. It is found in the endoplasmic reticulum membrane. Functions as a calcium-regulated nucleotide exchange factor activating both Ras and rac1 through the exchange of bound GDP for GTP. May function in synaptic plasticity. This Danio rerio (Zebrafish) protein is Ras-specific guanine nucleotide-releasing factor 2 (rasgrf2).